Reading from the N-terminus, the 305-residue chain is Phosphatidate cytidylyltransferase (305 aa).

A run of 7 helical transmembrane segments spans residues 24–44, 97–117, 124–144, 151–171, 202–222, 232–252, and 277–297; these read LLVF…AFIV, PEHV…HLVF, LGPI…SVPI, LYGF…IFLI, TVVG…IFYS, IAMP…GFFG, and MLDV…ILLI.

It belongs to the CDS family.

It localises to the cell membrane. The enzyme catalyses a 1,2-diacyl-sn-glycero-3-phosphate + CTP + H(+) = a CDP-1,2-diacyl-sn-glycerol + diphosphate. It participates in phospholipid metabolism; CDP-diacylglycerol biosynthesis; CDP-diacylglycerol from sn-glycerol 3-phosphate: step 3/3. The protein is Phosphatidate cytidylyltransferase (cdsA) of Chlamydia muridarum (strain MoPn / Nigg).